The following is a 478-amino-acid chain: MARTILRARRFFSLILPFFFISSVYAEQTSVPAKTVTVEAKNETFAPQHPDQYLSWKATSEQSTREDALAEDPRLVILWAGYPFSRDYNKPRGHAYAVTDVRETLRTGAPKNAEDGPLPMACWSCKSPDVARLIQKDGEDGYFHGKWARGGPEIVNALGCADCHNTASDDFAKGKPALTLSRPYAERAMETIGKPFDKASRFDQQSMVCGQCHVEYYFDGKNKAVKFPWDEGTKVEDMEKYYDAIAFSDWTNPLSKTPMLKAQHPEYETWSVGIHGKNNVTCIDCHMPKVQNAEGKLYTDHKIGNPFDNFAQTCANCHTQDKASLQKVVAERKQAIHDLKIKVEDQLVHAHFEAKAAWDAGATEAEMKPILDDIRHAQWRWDLAIASHGIHMHAPDEGLRMLGGAMDKAADARTKLVRLLGSKGITHEIPLPDISTKEKAQKAIGLNMQQINAEKQDFIKTVIPQWEDQARKNGLLSQ.

The N-terminal stretch at 1–26 (MARTILRARRFFSLILPFFFISSVYA) is a signal peptide. His-94 lines the heme c pocket. Residues Cys-122, Cys-125, and Lys-126 each contribute to the heme site. Positions 160, 163, 164, 209, 212, and 213 each coordinate heme c. Residues Glu-215, Tyr-216, Lys-261, and Gln-263 each contribute to the Ca(2+) site. Tyr-216 is a binding site for substrate. Position 264 (His-264) interacts with substrate. Heme c contacts are provided by His-275, Cys-282, Cys-285, His-286, His-301, Cys-314, Cys-317, His-318, and His-393.

The protein belongs to the cytochrome c-552 family. It depends on Ca(2+) as a cofactor. Heme c is required as a cofactor.

The protein resides in the periplasm. The enzyme catalyses 6 Fe(III)-[cytochrome c] + NH4(+) + 2 H2O = 6 Fe(II)-[cytochrome c] + nitrite + 8 H(+). The protein operates within nitrogen metabolism; nitrate reduction (assimilation). Functionally, catalyzes the reduction of nitrite to ammonia, consuming six electrons in the process. In Citrobacter koseri (strain ATCC BAA-895 / CDC 4225-83 / SGSC4696), this protein is Cytochrome c-552.